Reading from the N-terminus, the 86-residue chain is Large ribosomal subunit protein bL31 (86 aa).

The tract at residues 66 to 86 is disordered; that stretch reads GMGSADSATSQETKEAKESDK. A compositionally biased stretch (basic and acidic residues) spans 77–86; the sequence is ETKEAKESDK.

This sequence belongs to the bacterial ribosomal protein bL31 family. Type A subfamily. In terms of assembly, part of the 50S ribosomal subunit.

Its function is as follows. Binds the 23S rRNA. This is Large ribosomal subunit protein bL31 from Prochlorococcus marinus (strain MIT 9515).